An 809-amino-acid polypeptide reads, in one-letter code: Protein PHOX3 (809 aa).

The disordered stretch occupies residues 1 to 22 (MEKQNEEISTDDAETSQSQLVD). TPR repeat units follow at residues 126-159 (AQGLKEEGNKLFQKRDYDGAMFKYGEAIKILPKD), 164-199 (SHVRANVASCYMQLEPGEFAKAIHECDLALSVTPDH), 200-233 (NKALLKRARCYEALNKLDLALRDVCMVSKLDPKN), 235-265 (MASEIVEKLKRTLESKGLRINNSVIELPPDY), and 274-311 (AALWAKLGKVRVKKTKKSNQVEEKSEGEGEDVEPEKKN). The disordered stretch occupies residues 288 to 339 (TKKSNQVEEKSEGEGEDVEPEKKNNVLAEKGKEKIKMKVKGKQSDKRSDTSK). Phosphoserine is present on Ser-298. Residues 307–339 (PEKKNNVLAEKGKEKIKMKVKGKQSDKRSDTSK) are compositionally biased toward basic and acidic residues. Positions 359–438 (NKDVKFVYSD…GTMRFYVVEV (80 aa)) constitute a PB1 domain. TPR repeat units lie at residues 508 to 541 (SEAMEEVVTSDAAQGPFDRAAQQFQEVAARSLLN), 563 to 597 (ESVSEQVKTAYECAKKEHANAKEKYEEAMKIKPEC), and 615 to 648 (SWYYVLVSHLDLKTWPYADVVQFYQSAESNIKKS). Positions 656–686 (ETGKESEPSQAGKTDCLTHEKDLGSSTQNNP) are disordered. The stretch at 709 to 741 (SIMEYKLDQPFWRESLEAAMEKFELAGTCKDDV) is one TPR 9 repeat.

Its function is as follows. Carboxylate clamp type tetratricopeptide repeat protein that may act as a potential Hsp90/Hsp70 co-chaperone. Contributes to polar growth of root hairs. The protein is Protein PHOX3 of Arabidopsis thaliana (Mouse-ear cress).